The primary structure comprises 281 residues: Polyamine aminopropyltransferase (281 aa).

A PABS domain is found at glutamate 2 to asparagine 237. Glutamine 33 is an S-methyl-5'-thioadenosine binding site. Positions 64 and 88 each coordinate spermidine. S-methyl-5'-thioadenosine contacts are provided by residues glutamate 108 and aspartate 139 to glycine 140. Catalysis depends on aspartate 157, which acts as the Proton acceptor. Aspartate 157–aspartate 160 is a spermidine binding site. S-methyl-5'-thioadenosine is bound at residue proline 164.

It belongs to the spermidine/spermine synthase family. In terms of assembly, homodimer or homotetramer.

The protein resides in the cytoplasm. It carries out the reaction S-adenosyl 3-(methylsulfanyl)propylamine + putrescine = S-methyl-5'-thioadenosine + spermidine + H(+). The protein operates within amine and polyamine biosynthesis; spermidine biosynthesis; spermidine from putrescine: step 1/1. Catalyzes the irreversible transfer of a propylamine group from the amino donor S-adenosylmethioninamine (decarboxy-AdoMet) to putrescine (1,4-diaminobutane) to yield spermidine. The sequence is that of Polyamine aminopropyltransferase from Leptospira biflexa serovar Patoc (strain Patoc 1 / Ames).